Here is a 454-residue protein sequence, read N- to C-terminus: Protection of telomeres protein 1b (454 aa).

The protein belongs to the telombin family. In terms of assembly, interacts with TRB1, TRB2 and TRB3. As to expression, expressed at low levels in roots, rosette leaves, cauline leaves, stems and flowers.

It localises to the nucleus. It is found in the chromosome. Its subcellular location is the telomere. Functionally, negatively regulates telomerase activity and participates in chromosome end protection. Binds RNA non-specifically. Associates with a regulatory Pol III-dependent lncRNA, which represses telomerase activity in response to DNA damage. Binds single-stranded telomeric DNA with weak affinity. The sequence is that of Protection of telomeres protein 1b from Arabidopsis thaliana (Mouse-ear cress).